The chain runs to 281 residues: Diphthine methyl ester synthase (281 aa).

S-adenosyl-L-methionine-binding positions include Leu9, Asp84, Gly87, 112 to 113 (SI), and Leu163. Residue Ser171 is modified to Phosphoserine. S-adenosyl-L-methionine contacts are provided by Val225 and His250.

This sequence belongs to the diphthine synthase family.

It catalyses the reaction 2-[(3S)-amino-3-carboxypropyl]-L-histidyl-[translation elongation factor 2] + 4 S-adenosyl-L-methionine = diphthine methyl ester-[translation elongation factor 2] + 4 S-adenosyl-L-homocysteine + 3 H(+). It functions in the pathway protein modification; peptidyl-diphthamide biosynthesis. Its function is as follows. S-adenosyl-L-methionine-dependent methyltransferase that catalyzes four methylations of the modified target histidine residue in translation elongation factor 2 (EF-2), to form an intermediate called diphthine methyl ester. The four successive methylation reactions represent the second step of diphthamide biosynthesis. In Mus musculus (Mouse), this protein is Diphthine methyl ester synthase (Dph5).